The chain runs to 125 residues: Small ribosomal subunit protein bS6 (125 aa).

A disordered region spans residues 94–125 (KAETGASSMMKTVEREEARKASQAEFAASNER). The segment covering 105–115 (TVEREEARKAS) has biased composition (basic and acidic residues).

It belongs to the bacterial ribosomal protein bS6 family.

In terms of biological role, binds together with bS18 to 16S ribosomal RNA. The polypeptide is Small ribosomal subunit protein bS6 (Acidovorax ebreus (strain TPSY) (Diaphorobacter sp. (strain TPSY))).